The following is a 569-amino-acid chain: uncharacterized protein (569 aa).

A signal peptide spans 1–24 (MKFQRKYWGLLSTLGVSSAVALSA). The N-palmitoyl cysteine moiety is linked to residue cysteine 25. Cysteine 25 carries the S-diacylglycerol cysteine lipid modification. Disordered stretches follow at residues 111 to 137 (SNMK…EWEV) and 242 to 267 (GKNG…KKIE). Composition is skewed to low complexity over residues 119 to 130 (SSSSSSTGNNGS) and 249 to 260 (KKMTTDSSSTQQ).

To M.pneumoniae MPN_456 and M.genitalium MG321 N-terminal region.

It is found in the cell membrane. This is an uncharacterized protein from Mycoplasma pneumoniae (strain ATCC 29342 / M129 / Subtype 1) (Mycoplasmoides pneumoniae).